A 144-amino-acid chain; its full sequence is MAKKVVGYIKLQIPAGKANPSPPVGPALGQRGLNIMQFCKDFNAATQGMEVGMPVPVVITAYADRTFSFITKTPPNTYFLKKAAGIQKGSTATGKGATVGKVTMSQLREIAQTKMVHMNANDVDGAVRMLVGSARSMGLSVVEG.

The protein belongs to the universal ribosomal protein uL11 family. Part of the ribosomal stalk of the 50S ribosomal subunit. Interacts with L10 and the large rRNA to form the base of the stalk. L10 forms an elongated spine to which L12 dimers bind in a sequential fashion forming a multimeric L10(L12)X complex. In terms of processing, one or more lysine residues are methylated.

Functionally, forms part of the ribosomal stalk which helps the ribosome interact with GTP-bound translation factors. This Acidiphilium cryptum (strain JF-5) protein is Large ribosomal subunit protein uL11.